Consider the following 68-residue polypeptide: SERF-like protein YDL085C-A (68 aa).

Basic and acidic residues-rich tracts occupy residues 1-43 (MARG…EILR) and 50-68 (DARR…KTRR). A disordered region spans residues 1–68 (MARGNQRDLA…EKLKAEKTRR (68 aa)). S37 carries the post-translational modification Phosphoserine.

Belongs to the SERF family.

It is found in the cytoplasm. Its subcellular location is the nucleus. This chain is SERF-like protein YDL085C-A, found in Saccharomyces cerevisiae (strain ATCC 204508 / S288c) (Baker's yeast).